We begin with the raw amino-acid sequence, 630 residues long: tRNA uridine 5-carboxymethylaminomethyl modification enzyme MnmG (630 aa).

Residue 15–20 (GAGHAG) coordinates FAD. 274–288 (GPRYCPSIEDKIVRF) contacts NAD(+).

The protein belongs to the MnmG family. Homodimer. Heterotetramer of two MnmE and two MnmG subunits. The cofactor is FAD.

The protein resides in the cytoplasm. Functionally, NAD-binding protein involved in the addition of a carboxymethylaminomethyl (cmnm) group at the wobble position (U34) of certain tRNAs, forming tRNA-cmnm(5)s(2)U34. This Alkaliphilus oremlandii (strain OhILAs) (Clostridium oremlandii (strain OhILAs)) protein is tRNA uridine 5-carboxymethylaminomethyl modification enzyme MnmG.